The sequence spans 89 residues: Small ribosomal subunit protein uS15 (89 aa).

It belongs to the universal ribosomal protein uS15 family. Part of the 30S ribosomal subunit. Forms a bridge to the 50S subunit in the 70S ribosome, contacting the 23S rRNA.

One of the primary rRNA binding proteins, it binds directly to 16S rRNA where it helps nucleate assembly of the platform of the 30S subunit by binding and bridging several RNA helices of the 16S rRNA. In terms of biological role, forms an intersubunit bridge (bridge B4) with the 23S rRNA of the 50S subunit in the ribosome. The polypeptide is Small ribosomal subunit protein uS15 (Kineococcus radiotolerans (strain ATCC BAA-149 / DSM 14245 / SRS30216)).